A 739-amino-acid polypeptide reads, in one-letter code: DNA ligase (739 aa).

NAD(+)-binding positions include 34–38, 83–84, and E117; these read DADYD and SL. K119 (N6-AMP-lysine intermediate) is an active-site residue. The NAD(+) site is built by R140, E175, K291, and K315. The Zn(2+) site is built by C420, C423, C438, and C444. The BRCT domain occupies 660–739; sequence ADDSPVAGKT…DGWLDLIGQA (80 aa).

This sequence belongs to the NAD-dependent DNA ligase family. LigA subfamily. It depends on Mg(2+) as a cofactor. Mn(2+) serves as cofactor.

It catalyses the reaction NAD(+) + (deoxyribonucleotide)n-3'-hydroxyl + 5'-phospho-(deoxyribonucleotide)m = (deoxyribonucleotide)n+m + AMP + beta-nicotinamide D-nucleotide.. DNA ligase that catalyzes the formation of phosphodiester linkages between 5'-phosphoryl and 3'-hydroxyl groups in double-stranded DNA using NAD as a coenzyme and as the energy source for the reaction. It is essential for DNA replication and repair of damaged DNA. In Ruegeria sp. (strain TM1040) (Silicibacter sp.), this protein is DNA ligase.